The sequence spans 138 residues: ATP synthase epsilon chain, chloroplastic (138 aa).

The protein belongs to the ATPase epsilon chain family. As to quaternary structure, F-type ATPases have 2 components, CF(1) - the catalytic core - and CF(0) - the membrane proton channel. CF(1) has five subunits: alpha(3), beta(3), gamma(1), delta(1), epsilon(1). CF(0) has three main subunits: a, b and c.

The protein resides in the plastid. The protein localises to the chloroplast thylakoid membrane. Produces ATP from ADP in the presence of a proton gradient across the membrane. This Galdieria sulphuraria (Red alga) protein is ATP synthase epsilon chain, chloroplastic.